A 101-amino-acid chain; its full sequence is MARRSLSNRQARREELVARHADRRAELKRLIAHPDTDPDVRADAVRQLARLPRDSSPVRLRNRDVIDGRPRGVLTRFGLSRVRFREMALRGELPGIRKASW.

It belongs to the universal ribosomal protein uS14 family. As to quaternary structure, part of the 30S ribosomal subunit. Contacts proteins S3 and S10.

Its function is as follows. Binds 16S rRNA, required for the assembly of 30S particles and may also be responsible for determining the conformation of the 16S rRNA at the A site. The chain is Small ribosomal subunit protein uS14A from Salinispora tropica (strain ATCC BAA-916 / DSM 44818 / JCM 13857 / NBRC 105044 / CNB-440).